Consider the following 483-residue polypeptide: Arginine/agmatine antiporter (483 aa).

Helical transmembrane passes span 11–33 (ILGTLALTGIVISYMIGGGIFSL), 48–70 (LAWMLSGIGIFFIANTFKTLSII), 90–112 (VGFTIAWGYWLCQIFGNVGYAVI), 127–149 (GGNTIPAILLGSLLIWIFNYIVL), 156–178 (SFVNIIGVVCTLIPLLLFILITA), 209–228 (TMLVTLWAFIGIEGAVVISG), 241–263 (ILGFSGCLLIYVLLSLLPFGSLF), 293–315 (TGLLIAVLTSWLSWTILASEIPY), 335–357 (APSFSLFMTSGLMQITMLLVYFS), 367–389 (ITGVMVLPAYLTSSLFLVKFSLS), 415–435 (LWLIYAGGLQHLFMVAILLAL), and 458–477 (EILKMTIMALAALLAIFLFS).

This sequence belongs to the amino acid-polyamine-organocation (APC) superfamily. Basic amino acid/polyamine antiporter (APA) (TC 2.A.3.2) family.

The protein localises to the cell inner membrane. Its function is as follows. Catalyzes the exchange of L-arginine for agmatine. The arginine uptake by the bacterium in the macrophage may be a virulence factor against the host innate immune response. The polypeptide is Arginine/agmatine antiporter (aaxC) (Chlamydia trachomatis serovar L2 (strain ATCC VR-902B / DSM 19102 / 434/Bu)).